A 404-amino-acid chain; its full sequence is Propionate kinase (404 aa).

Belongs to the acetokinase family. PduW subfamily.

Its subcellular location is the cytoplasm. The catalysed reaction is propanoate + ATP = propanoyl phosphate + ADP. It participates in polyol metabolism; 1,2-propanediol degradation. In terms of biological role, works with phosphate acetyltransferase (pta) to capture exogenous propionate and regenerate propionyl-CoA during degradation of 1,2-propanediol (1,2-PD). This Citrobacter koseri (strain ATCC BAA-895 / CDC 4225-83 / SGSC4696) protein is Propionate kinase.